The sequence spans 326 residues: Interleukin-1-binding protein (326 aa).

The signal sequence occupies residues 1–18 (MSILPVIFLSIFFYSSFV). Ig-like domains are found at residues 24-115 (PECI…LNLT), 122-212 (SNID…RIVK), and 221-322 (PSTM…KTVT). Cys48 and Cys99 form a disulfide bridge. Residues Asn80, Asn103, and Asn113 are each glycosylated (N-linked (GlcNAc...) asparagine; by host). The cysteines at positions 143 and 194 are disulfide-linked. N-linked (GlcNAc...) asparagine; by host glycosylation is found at Asn206 and Asn237. Residues Cys242 and Cys309 are joined by a disulfide bond.

Belongs to the interleukin-1 receptor family. Interacts with mouse Il1b.

It localises to the secreted. May reduce the host inflammatory response by interacting with inteleukin-1 beta (Il1b) and thus decreasing the association between IL1B and its cellular receptor. The protein is Interleukin-1-binding protein (OPG201) of Vaccinia virus (strain Ankara) (VACV).